Here is a 1087-residue protein sequence, read N- to C-terminus: Exportin-7 (1087 aa).

Ala2 bears the N-acetylalanine mark. Positions 30 to 96 constitute an Importin N-terminal domain; sequence AEKALVEFTN…RNYVLNYLAT (67 aa). At Ser570 the chain carries Phosphoserine.

Belongs to the exportin family. As to quaternary structure, binds to nucleoporins. Found in a complex with XPO7, EIF4A1, ARHGAP1, VPS26A, VPS29, VPS35 and SFN. Interacts with ARHGAP1 and SFN. Interacts with Ran and cargo proteins in a GTP-dependent manner.

The protein resides in the cytoplasm. It localises to the nucleus. It is found in the nuclear pore complex. Mediates the nuclear export of proteins (cargos) with broad substrate specificity. In the nucleus binds cooperatively to its cargo and to the GTPase Ran in its active GTP-bound form. Docking of this trimeric complex to the nuclear pore complex (NPC) is mediated through binding to nucleoporins. Upon transit of a nuclear export complex into the cytoplasm, disassembling of the complex and hydrolysis of Ran-GTP to Ran-GDP (induced by RANBP1 and RANGAP1, respectively) cause release of the cargo from the export receptor. XPO7 then return to the nuclear compartment and mediate another round of transport. The directionality of nuclear export is thought to be conferred by an asymmetric distribution of the GTP- and GDP-bound forms of Ran between the cytoplasm and nucleus. This Pongo abelii (Sumatran orangutan) protein is Exportin-7 (XPO7).